Consider the following 744-residue polypeptide: MALRYPESDPVVRTVKHRLDSTDAAAHAAAPARTTTHPGAHPPLSAKDVRRLSMFAPALVRPAIVDSFRKLSPRAQAKNPVMFVVYIGSILTTLLWVMALRGQAEAPAGFILAVSVWLWFTVLFANVAEALAEGRSKQQAASLRGIKTTVQAKVLADPQRRDRVQPRAATALRRGDIVLIEAGDMVPGDGEVIEGVASVDESAITGESAPVIRESGGDFSSVTGGTRVLSDWIVARITANPGESFLDRMISMVEGAKRQKTPNELALTILLVSLTIILLLATVTLLPYSIFSVEVMKAAGVTSSPITITVLVALLVCLIPTTIGGLLSAIGVAGMSRMMQANVIATSGRAVEAAGDVDVLLLDKTGTITHGNRQASRFIPAPGVTVKALAEAAWLSSLADETPEGRSIVTLARQLGEAAVDEAALARSQPVFVPFSAQTRMSGINVALGDAAHQIRKGAADAIRTHVTVLAGRFPEAVLAAVEDVARKGGTPLVVSDNDRVMGVVELKDIVKAGIRERFAELRQMGIKTVMITGDNRLTAASIAAEAGVDDFIAEAAPETKLALIREQQAQGRLVAMTGDGTNDAPALAQADVAVAMNSGTQAAKEAGNMVDLDSSPTKLIQIVEIGKQMLMTRGSLTTFSIANDVAKYFAIIPAAFATTYPQLAALNVMRLATPASAVMSAVIFNALIIVFLIPLALKGVKYRPLGAAALLRRNLWIYGLGGLLLPFPGIKLIDMFLAAMGWV.

4 helical membrane passes run 80-100, 108-128, 265-285, and 310-330; these read PVMF…VMAL, AGFI…ANVA, LALT…TVTL, and VLVA…LSAI. D363 (4-aspartylphosphate intermediate) is an active-site residue. ATP is bound by residues D400, E404, 435-442, and K457; that span reads FSAQTRMS. Mg(2+) is bound by residues D580 and D584. A run of 3 helical transmembrane segments spans residues 650-670, 678-698, and 724-744; these read FAII…LNVM, AVMS…PLAL, and LLLP…MGWV.

It belongs to the cation transport ATPase (P-type) (TC 3.A.3) family. Type IA subfamily. In terms of assembly, the system is composed of three essential subunits: KdpA, KdpB and KdpC.

It localises to the cell inner membrane. It catalyses the reaction K(+)(out) + ATP + H2O = K(+)(in) + ADP + phosphate + H(+). Its function is as follows. Part of the high-affinity ATP-driven potassium transport (or Kdp) system, which catalyzes the hydrolysis of ATP coupled with the electrogenic transport of potassium into the cytoplasm. This subunit is responsible for energy coupling to the transport system and for the release of the potassium ions to the cytoplasm. This Ralstonia nicotianae (strain ATCC BAA-1114 / GMI1000) (Ralstonia solanacearum) protein is Potassium-transporting ATPase ATP-binding subunit.